The sequence spans 103 residues: MQPNDITFFQRFQDDILAGRKTITIRDESESHFKVGDILRVGRFEDEGYFCTIEVVGTSTVTLETLTEKHARQENMTLEELKHVIAGIYPDQTQFYVIDFKCL.

Positions 6–94 (ITFFQRFQDD…IAGIYPDQTQ (89 aa)) constitute an ASCH domain. Lys-21 functions as the Proton acceptor in the catalytic mechanism. Thr-24 functions as the Nucleophile in the catalytic mechanism. The active-site Proton donor is the Glu-74.

It belongs to the N(4)-acetylcytidine amidohydrolase family.

The enzyme catalyses N(4)-acetylcytidine + H2O = cytidine + acetate + H(+). It carries out the reaction N(4)-acetyl-2'-deoxycytidine + H2O = 2'-deoxycytidine + acetate + H(+). The catalysed reaction is N(4)-acetylcytosine + H2O = cytosine + acetate + H(+). Functionally, catalyzes the hydrolysis of N(4)-acetylcytidine (ac4C). The sequence is that of N(4)-acetylcytidine amidohydrolase from Citrobacter koseri (strain ATCC BAA-895 / CDC 4225-83 / SGSC4696).